The chain runs to 246 residues: CD99 antigen-like protein 2 (246 aa).

The first 25 residues, 1-25, serve as a signal peptide directing secretion; it reads MVARLTTLLVCLVFSLATLVQRGYG. Over 26–160 the chain is Extracellular; it reads DFDDFNLEDA…PGSGAVTDPG (135 aa). A disordered region spans residues 43-156; sequence KQSHFSTTTR…SQDDPGSGAV (114 aa). 2 stretches are compositionally biased toward low complexity: residues 49-58 and 71-81; these read TTTRRTGTTR and TTTTTKRPGTT. Basic and acidic residues predominate over residues 100–109; the sequence is DDRNDLDGPK. O-linked (Xyl...) (chondroitin sulfate) serine glycosylation occurs at serine 153. Residues 161–181 traverse the membrane as a helical segment; that stretch reads TIAGLVSALAAALLGAVSGYL. Over 182 to 246 the chain is Cytoplasmic; sequence SYQHRKFCFS…EPLAPERPRI (65 aa). The segment at 223–246 is disordered; the sequence is APPVTDSTQHSQPTEPLAPERPRI. Positions 227–236 are enriched in polar residues; it reads TDSTQHSQPT.

The protein belongs to the CD99 family. O-glycosylated. As to expression, expressed predominantly in the ventral medullary surface of the brain, moderate expression in the cerebral cortex and cerebellum. Low expression in lung and kidney. No expression in heart, stomach, intestine and skeletal muscle.

Its subcellular location is the cell membrane. It is found in the cell junction. The protein localises to the secreted. Plays a role in a late step of leukocyte extravasation helping cells to overcome the endothelial basement membrane. Acts at the same site as, but independently of, PECAM1. Homophilic adhesion molecule, but these interactions may not be required for cell aggregation. This is CD99 antigen-like protein 2 (Cd99l2) from Rattus norvegicus (Rat).